The chain runs to 602 residues: Replication protein E1 (602 aa).

Residues 79 to 81 (KRK) carry the Nuclear localization signal motif. Phosphoserine; by host occurs at positions 85 and 92. Positions 91–100 (LSPRLQCISI) match the Nuclear export signal motif. Residues 142–305 (QGAKGLGIVK…TMINHQTAEA (164 aa)) form a DNA-binding region region. The 151-residue stretch at 404 to 554 (INFIQFLDSF…FPFDSDNNPQ (151 aa)) folds into the SF3 helicase domain. ATP is bound at residue 430–437 (GPPDTGKS).

The protein belongs to the papillomaviridae E1 protein family. As to quaternary structure, can form hexamers. Interacts with E2 protein; this interaction increases E1 DNA binding specificity. Interacts with host DNA polymerase subunit POLA2. Interacts with host single stranded DNA-binding protein RPA1. Interacts with host TOP1; this interaction stimulates the enzymatic activity of TOP1. Phosphorylated.

It localises to the host nucleus. It catalyses the reaction Couples ATP hydrolysis with the unwinding of duplex DNA by translocating in the 3'-5' direction.. The catalysed reaction is ATP + H2O = ADP + phosphate + H(+). ATP-dependent DNA 3'-5' helicase required for initiation of viral DNA replication. It forms a complex with the viral E2 protein. The E1-E2 complex binds to the replication origin which contains binding sites for both proteins. During the initial step, a dimer of E1 interacts with a dimer of protein E2 leading to a complex that binds the viral origin of replication with high specificity. Then, a second dimer of E1 displaces the E2 dimer in an ATP-dependent manner to form the E1 tetramer. Following this, two E1 monomers are added to each half of the site, which results in the formation of two E1 trimers on the viral ori. Subsequently, two hexamers will be created. The double hexamer acts as a bi-directional helicase machinery and unwinds the viral DNA and then recruits the host DNA polymerase to start replication. This Homo sapiens (Human) protein is Replication protein E1.